A 246-amino-acid chain; its full sequence is Zorya protein ZorB (246 aa).

A helical transmembrane segment spans residues 20–40 (FWISYADLMTAMMVLFLVVMV). Residues 86–218 (CHDNRISFGE…RVELRMQFFG (133 aa)) enclose the OmpA-like domain.

It belongs to the MotB family.

The protein localises to the cell inner membrane. In terms of biological role, component of antiviral defense system Zorya type I, composed of ZorA, ZorB, ZorC and ZorD. Expression of Zorya type I in E.coli (strain MG1655) confers 10,000-fold resistance to phage SECphi27, 100-fold resistance to lambda, and 10-fold resistance to T7. While most T7 infected Zorya-containing cells undergo abortive infection, a minority produce viable phage progeny. These eventually accumulate to a high multiplicity of infection, leading to culture collapse by 2 hours after initial infection. ZorA and ZorB probably assemble in the cell inner membrane and exert their effect there. The polypeptide is Zorya protein ZorB (Escherichia coli O139:H28 (strain E24377A / ETEC)).